A 211-amino-acid chain; its full sequence is Thiamine-phosphate synthase (211 aa).

4-amino-2-methyl-5-(diphosphooxymethyl)pyrimidine is bound by residues 37 to 41 (QLRIK) and N69. Mg(2+) is bound by residues D70 and D89. Residue S108 participates in 4-amino-2-methyl-5-(diphosphooxymethyl)pyrimidine binding. 134 to 136 (TQT) contributes to the 2-[(2R,5Z)-2-carboxy-4-methylthiazol-5(2H)-ylidene]ethyl phosphate binding site. K137 lines the 4-amino-2-methyl-5-(diphosphooxymethyl)pyrimidine pocket. 2-[(2R,5Z)-2-carboxy-4-methylthiazol-5(2H)-ylidene]ethyl phosphate is bound by residues G166 and 186 to 187 (VS).

It belongs to the thiamine-phosphate synthase family. Mg(2+) serves as cofactor.

It catalyses the reaction 2-[(2R,5Z)-2-carboxy-4-methylthiazol-5(2H)-ylidene]ethyl phosphate + 4-amino-2-methyl-5-(diphosphooxymethyl)pyrimidine + 2 H(+) = thiamine phosphate + CO2 + diphosphate. It carries out the reaction 2-(2-carboxy-4-methylthiazol-5-yl)ethyl phosphate + 4-amino-2-methyl-5-(diphosphooxymethyl)pyrimidine + 2 H(+) = thiamine phosphate + CO2 + diphosphate. The catalysed reaction is 4-methyl-5-(2-phosphooxyethyl)-thiazole + 4-amino-2-methyl-5-(diphosphooxymethyl)pyrimidine + H(+) = thiamine phosphate + diphosphate. It functions in the pathway cofactor biosynthesis; thiamine diphosphate biosynthesis; thiamine phosphate from 4-amino-2-methyl-5-diphosphomethylpyrimidine and 4-methyl-5-(2-phosphoethyl)-thiazole: step 1/1. Its function is as follows. Condenses 4-methyl-5-(beta-hydroxyethyl)thiazole monophosphate (THZ-P) and 2-methyl-4-amino-5-hydroxymethyl pyrimidine pyrophosphate (HMP-PP) to form thiamine monophosphate (TMP). This Escherichia coli (strain SE11) protein is Thiamine-phosphate synthase.